A 474-amino-acid polypeptide reads, in one-letter code: Pyruvate kinase (474 aa).

Arg37 contacts substrate. 3 residues coordinate K(+): Asn39, Ser41, and Asp71. Position 39–42 (39–42 (NFSH)) interacts with ATP. Residues Arg78 and Lys160 each coordinate ATP. Glu222 is a Mg(2+) binding site. Gly245, Asp246, and Thr278 together coordinate substrate. Asp246 is a binding site for Mg(2+).

This sequence belongs to the pyruvate kinase family. In terms of assembly, homotetramer. Mg(2+) serves as cofactor. K(+) is required as a cofactor.

It catalyses the reaction pyruvate + ATP = phosphoenolpyruvate + ADP + H(+). It participates in carbohydrate degradation; glycolysis; pyruvate from D-glyceraldehyde 3-phosphate: step 5/5. In Agrobacterium vitis (Rhizobium vitis), this protein is Pyruvate kinase (ttuE).